The following is an 848-amino-acid chain: Coiled-coil and C2 domain-containing protein 1B (848 aa).

A compositionally biased stretch (basic residues) spans 1–10; the sequence is MPGPRPRKGP. Disordered stretches follow at residues 1 to 21 and 53 to 75; these read MPGPRPRKGPKTSGQGAETAK and ALTGETASRSRKPAPKGQAPLPM. The stretch at 165-193 forms a coiled coil; it reads LQALLEERIRNYREAAASAKEAGEAAKAR. Disordered stretches follow at residues 217 to 276, 326 to 353, 433 to 460, and 476 to 523; these read EDEI…DPDP, VDLSGMPPAPADLKALPQASKASSATQG, DFAELPVPPGFPPIPGLEPRKGSEQDSV, and ALVD…SPSV. Residues 438 to 448 show a composition bias toward pro residues; the sequence is PVPPGFPPIPG. Serine 455 carries the post-translational modification Phosphoserine. Acidic residues predominate over residues 476 to 485; it reads ALVDDDEESD. Low complexity-rich tracts occupy residues 487-498 and 509-522; these read PAQAPLAKKPAQ and EPKASSSKESLSPS. Serine 583 bears the Phosphoserine mark. Threonine 586 is subject to Phosphothreonine. Residues 600–626 are a coiled coil; the sequence is LRLSQKAEEVYAQLQKMLQEQQAKCLL. In terms of domain architecture, C2 spans 666-805; it reads DPPSHHFELK…EKECEIREIM (140 aa).

This sequence belongs to the CC2D1 family. Interacts with CHMP4B.

Its subcellular location is the nucleus. Functionally, transcription factor that binds specifically to the DRE (dual repressor element) and represses HTR1A gene transcription in neuronal cells. This is Coiled-coil and C2 domain-containing protein 1B (Cc2d1b) from Mus musculus (Mouse).